Consider the following 147-residue polypeptide: uncharacterized protein (147 aa).

The 89-residue stretch at 50–138 (IVVAGNIKVK…LLAKPAEIKI (89 aa)) folds into the ABM domain.

It belongs to the LsrG family.

This is an uncharacterized protein from Synechocystis sp. (strain ATCC 27184 / PCC 6803 / Kazusa).